A 245-amino-acid chain; its full sequence is Ribosomal RNA small subunit methyltransferase G (245 aa).

Residues Gly90, Leu95, 140–141 (AE), and Arg158 each bind S-adenosyl-L-methionine. The segment at 223–245 (VVSARRAKPPHPKSARTGKAGTR) is disordered. Positions 227-245 (RRAKPPHPKSARTGKAGTR) are enriched in basic residues.

It belongs to the methyltransferase superfamily. RNA methyltransferase RsmG family.

Its subcellular location is the cytoplasm. Functionally, specifically methylates the N7 position of guanine in position 518 of 16S rRNA. This Mycobacterium avium (strain 104) protein is Ribosomal RNA small subunit methyltransferase G.